The following is a 335-amino-acid chain: Chitin synthase export chaperone (335 aa).

7 helical membrane passes run 55-75 (IIFQ…ILIM), 92-112 (FHFL…DAGV), 129-149 (GAIS…FQFY), 164-184 (TLCA…PSWG), 193-213 (TVGL…VYIL), 220-240 (IFIL…FFFV), and 259-279 (HYID…MMVY).

This sequence belongs to the CHS7 family. Interacts with CHS3.

It is found in the endoplasmic reticulum membrane. Functionally, chaperone required for the export of the chitin synthase CHS3 from the endoplasmic reticulum. This Yarrowia lipolytica (strain CLIB 122 / E 150) (Yeast) protein is Chitin synthase export chaperone (CHS7).